Here is a 250-residue protein sequence, read N- to C-terminus: MFLLLSNDDGYASAGMRALVEVMEGAVERLIVMAPESNCSGVSHALTLTRPLTVQTHGNAIYSVNGTPADCVRVAVGGYFDEVPDMVISGINCGANLGDDVLYSGTVAAAFEGRYLKFPALAISNVAHRPKHLADTAQIVLDLFSFFKKNPLTGATLLNINIPDLPRAEIRGIRVTRLGQCRQERPLEKMINPRQEECYWIGANKGGFLADEGSDFAAIEQGFVSITPLQFDVTHDDQLEAVKHWLEPMR.

Residues Asp-8, Asp-9, Ser-40, and Asn-92 each coordinate a divalent metal cation.

This sequence belongs to the SurE nucleotidase family. It depends on a divalent metal cation as a cofactor.

It localises to the cytoplasm. The enzyme catalyses a ribonucleoside 5'-phosphate + H2O = a ribonucleoside + phosphate. Nucleotidase that shows phosphatase activity on nucleoside 5'-monophosphates. The sequence is that of 5'-nucleotidase SurE from Dichelobacter nodosus (strain VCS1703A).